The chain runs to 131 residues: Lymphocyte antigen 6C1 (131 aa).

A signal peptide spans 1-26; that stretch reads MDTSHTTKSCVLILLVALLCAERAQG. In terms of domain architecture, UPAR/Ly6 spans 27–115; the sequence is LQCYECYGVP…PTAGSTWTMA (89 aa). Cystine bridges form between Cys29-Cys53, Cys32-Cys41, Cys46-Cys74, Cys78-Cys95, and Cys96-Cys101. Gly109 carries GPI-anchor amidated glycine lipidation. A propeptide spans 110–131 (removed in mature form); the sequence is STWTMAGVLLFSLSSVVLQTLL.

The protein localises to the cell membrane. The polypeptide is Lymphocyte antigen 6C1 (Ly6c1) (Mus musculus (Mouse)).